A 432-amino-acid polypeptide reads, in one-letter code: MSIITDVYAREVLDSRGNPTLEVEVYTESGAFGRGMVPSGASTGEHEAVELRDGDKSRYGGLGTQKAVDNVNNIIAEALIGYDVRDQQAIDKAMIALDGTPNKGKLGANAILGVSIAVARAAADFLEIPLYSYLGGFNTKVLPTPMMNIINGGSHSDAPIAFQEFMIVPAGAPTFKEALRWGAEIFHALKKILKERGLETAVGDEGGFAPKFDGTEDAVETIIKAIETAGYKPGEEVFLGFDCASSEFYDNGVYDYTKFEGEKGAKRSAAEQIDYIEELVNKYPIITIEDAMDENDWDGWKALTARLGDRVQLVGDDFFVTNTDYLARGIKEGAANSILIKVNQIGTLTETFEAIEMAKEAGYTAVVSHRSGETEDSTIADISVATNAGQIKTGSLSRTDRIAKYNQLLRIEDQLGEVAEYRGLKSFYNLKK.

Q163 lines the (2R)-2-phosphoglycerate pocket. The active-site Proton donor is E205. Mg(2+) contacts are provided by D242, E289, and D316. Positions 341, 370, 371, and 392 each coordinate (2R)-2-phosphoglycerate. K341 (proton acceptor) is an active-site residue.

This sequence belongs to the enolase family. The cofactor is Mg(2+). In terms of processing, probably phosphorylated.

Its subcellular location is the cytoplasm. It is found in the secreted. The protein localises to the cell surface. It catalyses the reaction (2R)-2-phosphoglycerate = phosphoenolpyruvate + H2O. It functions in the pathway carbohydrate degradation; glycolysis; pyruvate from D-glyceraldehyde 3-phosphate: step 4/5. Its function is as follows. Catalyzes the reversible conversion of 2-phosphoglycerate (2-PG) into phosphoenolpyruvate (PEP). It is essential for the degradation of carbohydrates via glycolysis. Functionally, 'Moonlights' as a plasminogen receptor. Binds plasminogen and human salivary mucin MG2 when expressed on the bacterial cell surface, potentially allowing the bacterium to acquire surface-associated proteolytic activity that may help the dissemination through oral tissues and entrance into the blood stream. The sequence is that of Enolase from Streptococcus mutans serotype c (strain ATCC 700610 / UA159).